The primary structure comprises 189 residues: Putative transcription factor ovo-like protein 3 (189 aa).

A disordered region spans residues 1–20 (MPRVFLVRSRRPQPPNWSHL). 4 consecutive C2H2-type zinc fingers follow at residues 69–91 (LGCP…LKCH), 97–119 (HVCH…MRTH), 125–148 (FRCG…AKVH), and 164–186 (HVCE…RTLH).

It belongs to the krueppel C2H2-type zinc-finger protein family.

The protein localises to the nucleus. May act as a transcription regulator. This is Putative transcription factor ovo-like protein 3 (Ovol3) from Mus musculus (Mouse).